The chain runs to 126 residues: NADH-quinone oxidoreductase subunit A (126 aa).

Transmembrane regions (helical) follow at residues 16–36 (ILVL…AAAI), 73–93 (ILFI…VAFG), and 95–115 (MSMT…VGFA).

This sequence belongs to the complex I subunit 3 family. In terms of assembly, NDH-1 is composed of 14 different subunits. Subunits NuoA, H, J, K, L, M, N constitute the membrane sector of the complex.

Its subcellular location is the cell inner membrane. The catalysed reaction is a quinone + NADH + 5 H(+)(in) = a quinol + NAD(+) + 4 H(+)(out). Functionally, NDH-1 shuttles electrons from NADH, via FMN and iron-sulfur (Fe-S) centers, to quinones in the respiratory chain. The immediate electron acceptor for the enzyme in this species is believed to be ubiquinone. Couples the redox reaction to proton translocation (for every two electrons transferred, four hydrogen ions are translocated across the cytoplasmic membrane), and thus conserves the redox energy in a proton gradient. This is NADH-quinone oxidoreductase subunit A from Rhodobacter capsulatus (Rhodopseudomonas capsulata).